The chain runs to 291 residues: Methylsterol monooxygenase 1 (291 aa).

2 helical membrane-spanning segments follow: residues 55–75 (LIVH…FQFL) and 100–120 (MLLF…YYFT). Residues 145–274 (CAVIEDTWHY…FTWWDRLFDT (130 aa)) enclose the Fatty acid hydroxylase domain. Positions 157-161 (HRALH) match the Histidine box-1 motif. The Histidine box-2 motif lies at 170 to 174 (HKVHH). The chain crosses the membrane as a helical span at residues 199–219 (FFIGTMVFCNHMILLWAWVTF). The short motif at 249-255 (FHDFHHM) is the Histidine box-3 element.

This sequence belongs to the sterol desaturase family. It depends on Fe cation as a cofactor.

Its subcellular location is the endoplasmic reticulum membrane. It catalyses the reaction 4,4-dimethyl-5alpha-cholest-7-en-3beta-ol + 6 Fe(II)-[cytochrome b5] + 3 O2 + 5 H(+) = 4alpha-carboxy-4beta-methyl-5alpha-cholest-7-ene-3beta-ol + 6 Fe(III)-[cytochrome b5] + 4 H2O. It functions in the pathway steroid biosynthesis; zymosterol biosynthesis; zymosterol from lanosterol: step 3/6. Its function is as follows. Catalyzes the first step in the removal of the two C-4 methyl groups of 4,4-dimethylzymosterol. The protein is Methylsterol monooxygenase 1 (msmo1) of Danio rerio (Zebrafish).